The chain runs to 718 residues: Polyphosphate kinase (718 aa).

Asn-47 is an ATP binding site. Arg-372 and Arg-402 together coordinate Mg(2+). The active-site Phosphohistidine intermediate is His-432. ATP is bound by residues Tyr-465, Arg-561, and His-589. The interval 683 to 718 (KADHGDTTPTSNAHQFIPMMSPKNEPDASDLDREDD) is disordered. Positions 709–718 (DASDLDREDD) are enriched in acidic residues.

The protein belongs to the polyphosphate kinase 1 (PPK1) family. The cofactor is Mg(2+). In terms of processing, an intermediate of this reaction is the autophosphorylated ppk in which a phosphate is covalently linked to a histidine residue through a N-P bond.

The enzyme catalyses [phosphate](n) + ATP = [phosphate](n+1) + ADP. Catalyzes the reversible transfer of the terminal phosphate of ATP to form a long-chain polyphosphate (polyP). The protein is Polyphosphate kinase of Lactiplantibacillus plantarum (strain ATCC BAA-793 / NCIMB 8826 / WCFS1) (Lactobacillus plantarum).